A 124-amino-acid chain; its full sequence is Small ribosomal subunit protein eS25 (124 aa).

Positions methionine 1–valine 22 are enriched in basic and acidic residues. Residues methionine 1–glycine 37 are disordered. Residues glycine 27–glycine 37 show a composition bias toward basic residues.

Belongs to the eukaryotic ribosomal protein eS25 family. Component of the small ribosomal subunit.

It is found in the cytoplasm. Functionally, component of the small ribosomal subunit. The ribosome is a large ribonucleoprotein complex responsible for the synthesis of proteins in the cell. In Danio rerio (Zebrafish), this protein is Small ribosomal subunit protein eS25 (rps25).